Reading from the N-terminus, the 441-residue chain is Tol-Pal system protein TolB (441 aa).

The signal sequence occupies residues 1–25 (MRIFFFAYVLPTVISLLLGCQGAIA).

It belongs to the TolB family. In terms of assembly, the Tol-Pal system is composed of five core proteins: the inner membrane proteins TolA, TolQ and TolR, the periplasmic protein TolB and the outer membrane protein Pal. They form a network linking the inner and outer membranes and the peptidoglycan layer.

The protein localises to the periplasm. Its function is as follows. Part of the Tol-Pal system, which plays a role in outer membrane invagination during cell division and is important for maintaining outer membrane integrity. This Anaplasma marginale (strain St. Maries) protein is Tol-Pal system protein TolB.